Consider the following 339-residue polypeptide: uncharacterized protein (339 aa).

Zn(2+) contacts are provided by His-17, His-19, His-197, and Asp-278. Asp-279 contacts substrate.

The protein belongs to the metallo-dependent hydrolases superfamily. Adenosine and AMP deaminases family. Adenine deaminase type 2 subfamily. It depends on Zn(2+) as a cofactor.

It is found in the cytoplasm. The protein localises to the nucleus. This is an uncharacterized protein from Schizosaccharomyces pombe (strain 972 / ATCC 24843) (Fission yeast).